A 37-amino-acid polypeptide reads, in one-letter code: Large ribosomal subunit protein bL36 (37 aa).

The protein belongs to the bacterial ribosomal protein bL36 family.

The protein is Large ribosomal subunit protein bL36 of Mesomycoplasma hyopneumoniae (strain 7448) (Mycoplasma hyopneumoniae).